The following is a 638-amino-acid chain: 1-deoxy-D-xylulose-5-phosphate synthase (638 aa).

Thiamine diphosphate contacts are provided by residues His-72 and 113–115; that span reads GHA. Mg(2+) is bound at residue Asp-144. Thiamine diphosphate is bound by residues 145 to 146, Asn-174, Tyr-287, and Glu-370; that span reads GA. A Mg(2+)-binding site is contributed by Asn-174.

The protein belongs to the transketolase family. DXPS subfamily. In terms of assembly, homodimer. It depends on Mg(2+) as a cofactor. Thiamine diphosphate is required as a cofactor.

The catalysed reaction is D-glyceraldehyde 3-phosphate + pyruvate + H(+) = 1-deoxy-D-xylulose 5-phosphate + CO2. Its pathway is metabolic intermediate biosynthesis; 1-deoxy-D-xylulose 5-phosphate biosynthesis; 1-deoxy-D-xylulose 5-phosphate from D-glyceraldehyde 3-phosphate and pyruvate: step 1/1. Its function is as follows. Catalyzes the acyloin condensation reaction between C atoms 2 and 3 of pyruvate and glyceraldehyde 3-phosphate to yield 1-deoxy-D-xylulose-5-phosphate (DXP). This Thermosynechococcus vestitus (strain NIES-2133 / IAM M-273 / BP-1) protein is 1-deoxy-D-xylulose-5-phosphate synthase.